A 547-amino-acid polypeptide reads, in one-letter code: Probable FMN/FAD exporter YeeO (547 aa).

Helical transmembrane passes span 94 to 114 (ITPL…MGVL), 139 to 159 (VIMA…AFSL), 174 to 194 (SLVI…HFGE), 211 to 231 (LALT…ITLI), 246 to 268 (LLIN…YGLF), 281 to 301 (GLTI…AIGF), 318 to 338 (FSII…SVLF), 350 to 370 (AGMG…AALI), 404 to 424 (VFWL…PFAG), 439 to 459 (VVVI…ASWV), and 486 to 506 (VVVG…VWMG).

Belongs to the multi antimicrobial extrusion (MATE) (TC 2.A.66.1) family.

Its subcellular location is the cell inner membrane. A transporter able to export peptides and flavins. When overexpressed allows cells deleted for multiple peptidases (pepA, pepB, pepD and pepN) to grow in the presence of dipeptides Ala-Gln or Gly-Tyr which otherwise inhibit growth. Cells overexpressing this protein have decreased intracellular levels of Ala-Gln dipeptide, and in a system that produces the Ala-Gln dipeptide, overproduction of this protein increases its export. When overexpressed increases secretion of FMN and FAD but not riboflavin; intracellular concentrations of FMN and riboflavin rise, possibly to compensate for increased secretion. Increased overexpression causes slight cell elongation. In Escherichia coli (strain K12), this protein is Probable FMN/FAD exporter YeeO (yeeO).